The chain runs to 591 residues: Protein enabled homolog (591 aa).

Positions 1–111 (MSEQSICQAR…SAMMHALEVL (111 aa)) constitute a WH1 domain. The span at 115 to 136 (ETGPTLPRQNSQLPAQVQNGPS) shows a compositional bias: polar residues. Positions 115–146 (ETGPTLPRQNSQLPAQVQNGPSQEELEIQRRQ) are disordered. Ser-125 carries the post-translational modification Phosphoserine. A coiled-coil region spans residues 135-265 (PSQEELEIQR…LEWERERRIS (131 aa)). 9 tandem repeats follow at residues 156 to 160 (LERER), 161 to 165 (LERER), 166 to 170 (MERER), 171 to 175 (LERER), 176 to 180 (LERER), 181 to 185 (LERER), 186 to 190 (LEQEQ), 191 to 195 (LERER), and 196 to 200 (QERER). The 9 X 5 AA tandem repeats of [LMQ]-E-[QR]-E-[QR] stretch occupies residues 156-200 (LERERLERERMERERLERERLERERLERERLEQEQLERERQERER). Residues 221–264 (RLDRERQERQERERLERLERERQERERQEQLEREQLEWERERRI) are compositionally biased toward basic and acidic residues. Residues 221–379 (RLDRERQERQ…PPLPASGFFL (159 aa)) form a disordered region. Ser-265 is subject to Phosphoserine; by PKA. Residues 275-305 (TPLNSVLGDSSASEPGLQAASQPAETPSQQG) are compositionally biased toward polar residues. Pro residues-rich tracts occupy residues 311-323 (LAPP…PPGP) and 330-373 (LPPP…PPLP). An EVH2 block A region spans residues 391–411 (GLAAAIAGAKLRKVSRMEDTS). Positions 391-588 (GLAAAIAGAK…DAIRQELSKS (198 aa)) are EVH2. A KLKR motif is present at residues 400 to 403 (KLRK). The segment at 405 to 549 (SRMEDTSFPS…LSQPSANGVQ (145 aa)) is disordered. Residues 432-443 (RGNGPLPLGGSG) show a composition bias toward gly residues. The segment at 442–459 (SGLMEEMSALLARRRRIA) is EVH2 block B. Ile-465 is modified (phosphothreonine). Phosphoserine occurs at positions 471 and 475. Polar residues-rich tracts occupy residues 479-491 (PVTS…STPE) and 499-509 (RTNTMNGSKSP). Thr-502 is subject to Phosphothreonine. Phosphoserine is present on residues Ser-506, Ser-508, and Ser-512. The span at 538–549 (TPLSQPSANGVQ) shows a compositional bias: polar residues. The EVH2 block C stretch occupies residues 554-588 (DYDRLKQDILDEMRKELTKLKEELIDAIRQELSKS). A coiled-coil region spans residues 557–587 (RLKQDILDEMRKELTKLKEELIDAIRQELSK).

The protein belongs to the Ena/VASP family. Homotetramer. Interacts with APBB1IP, APBB1, PFN1 and ROBO4. Isoforms, containing the polyproline-rich regions with PPLP motifs, bind the WW domain of APBB1IP. Isoforms, containing the PPSY motif, bind, in vitro, to the WW2 and WW3 domains of NEDD4 and to the WW1 domain of YAP1. Binds the SH3 domain of BAIAP2-alpha but only after the autoinhibitory region of BAIAP2-alpha has been blocked by interaction with CDC42. Interacts, via the EVH1/WH1 domain, with the Pro-rich domains from VCL, ZYX and Listeria monocytogenes actA and with TES (via LIM domains). The TES LIM domain and the Pro-rich domains from VCL or ZYX compete for the same binding site. Interaction with ZYX is important for targeting ENAH to focal adhesions and enhances production of actin-rich structures at the apical surface of cells. Interacts, through the Pro-rich region, with the C-terminal SH3 domain of DNMPB. Binds GPHN. Interacts with FAT1 (via EVH1 domains). Heterotrimer with TES and ACTL7A. Interacts with PRPF40A. Post-translationally, NTN1-induced PKA phosphorylation on Ser-265 directly parallels the formation of filopodial protrusions. In terms of tissue distribution, expressed in myoepithelia of parotid, breast, bronchial glands and sweat glands. Expressed in colon-rectum muscolaris mucosae epithelium, pancreas acinar ductal epithelium, endometrium epithelium, prostate fibromuscolar stroma and placenta vascular media. Overexpressed in a majority of breast cancer cell lines and primary breast tumor lesions.

The protein localises to the cytoplasm. It is found in the cytoskeleton. It localises to the cell projection. The protein resides in the lamellipodium. Its subcellular location is the filopodium. The protein localises to the synapse. It is found in the cell junction. It localises to the focal adhesion. Its function is as follows. Ena/VASP proteins are actin-associated proteins involved in a range of processes dependent on cytoskeleton remodeling and cell polarity such as axon guidance and lamellipodial and filopodial dynamics in migrating cells. ENAH induces the formation of F-actin rich outgrowths in fibroblasts. Acts synergistically with BAIAP2-alpha and downstream of NTN1 to promote filipodia formation. This chain is Protein enabled homolog (ENAH), found in Homo sapiens (Human).